The primary structure comprises 396 residues: ATP-dependent RNA helicase eIF4A (396 aa).

A disordered region spans residues 1–20 (MADKGLEDVPEGQIESNYDE). The short motif at 23-51 (DSFDAMNLKAELLRGVYAYGFERPSAIQQ) is the Q motif element. The Helicase ATP-binding domain maps to 54–224 (IMPVIKGHDV…TKFMRDPVRI (171 aa)). 67–74 (AQSGTGKT) is an ATP binding site. The DEAD box signature appears at 172 to 175 (DEAD). The 162-residue stretch at 235 to 396 (GIKQFYIAVE…EMPMNVADLI (162 aa)) folds into the Helicase C-terminal domain.

This sequence belongs to the DEAD box helicase family. eIF4A subfamily. Component of the eIF4F complex, which composition varies with external and internal environmental conditions. It is composed of at least eIF4A, eIF4E and eIF4G.

It localises to the cytoplasm. It carries out the reaction ATP + H2O = ADP + phosphate + H(+). Functionally, ATP-dependent RNA helicase which is a subunit of the eIF4F complex involved in cap recognition and is required for mRNA binding to ribosome. In the current model of translation initiation, eIF4A unwinds RNA secondary structures in the 5'-UTR of mRNAs which is necessary to allow efficient binding of the small ribosomal subunit, and subsequent scanning for the initiator codon. The polypeptide is ATP-dependent RNA helicase eIF4A (TIF1) (Phaeosphaeria nodorum (strain SN15 / ATCC MYA-4574 / FGSC 10173) (Glume blotch fungus)).